The primary structure comprises 94 residues: Neutrophil defensin 6 (94 aa).

A signal peptide spans 1 to 19; it reads MRTIAILAAILLFALLAQA. Positions 20-61 are excised as a propeptide; sequence KSLQETADEAATQEQPGEDDQDLAVSFEENGLSTLRASGSQA. 3 disulfide bridges follow: Cys-65/Cys-93, Cys-67/Cys-82, and Cys-72/Cys-92.

It belongs to the alpha-defensin family.

The protein localises to the secreted. Its function is as follows. Defensins 6 and 7 have bacteriostatic activity against Gram-positive bacteria S.aureus and L.monocytogenes and Gram-negative bacterium E.coli and antifungal activity against C.neoformans. Defensin 7 has microbicidial activity against Gram-positive bacteria S.aureus and L.monocytogenes. This is Neutrophil defensin 6 from Macaca mulatta (Rhesus macaque).